Consider the following 491-residue polypeptide: Beta-galactosidase (491 aa).

Catalysis depends on Glu-209, which acts as the Proton donor. The active-site Nucleophile is Glu-389.

This sequence belongs to the glycosyl hydrolase 1 family.

The catalysed reaction is Hydrolysis of terminal non-reducing beta-D-galactose residues in beta-D-galactosides.. This is Beta-galactosidase (bgaS) from Sulfolobus acidocaldarius (strain ATCC 33909 / DSM 639 / JCM 8929 / NBRC 15157 / NCIMB 11770).